The primary structure comprises 319 residues: ATP-dependent 6-phosphofructokinase (319 aa).

ATP is bound at residue Gly-11. 21-25 (RAVVR) lines the ADP pocket. Residues 72-73 (RC) and 102-105 (GDGS) contribute to the ATP site. Asp-103 provides a ligand contact to Mg(2+). 125–127 (TID) is a substrate binding site. Asp-127 functions as the Proton acceptor in the catalytic mechanism. Arg-154 contributes to the ADP binding site. Substrate-binding positions include Arg-162 and 169–171 (MGR). ADP contacts are provided by residues 185–187 (GAE), Arg-211, and 213–215 (KKH). Substrate is bound by residues Glu-222, Arg-243, and 249–252 (HVQR).

It belongs to the phosphofructokinase type A (PFKA) family. ATP-dependent PFK group I subfamily. Prokaryotic clade 'B1' sub-subfamily. Homotetramer. Mg(2+) is required as a cofactor.

It is found in the cytoplasm. It catalyses the reaction beta-D-fructose 6-phosphate + ATP = beta-D-fructose 1,6-bisphosphate + ADP + H(+). The protein operates within carbohydrate degradation; glycolysis; D-glyceraldehyde 3-phosphate and glycerone phosphate from D-glucose: step 3/4. Allosterically activated by ADP and other diphosphonucleosides, and allosterically inhibited by phosphoenolpyruvate. In terms of biological role, catalyzes the phosphorylation of D-fructose 6-phosphate to fructose 1,6-bisphosphate by ATP, the first committing step of glycolysis. This Geobacillus sp. (strain WCH70) protein is ATP-dependent 6-phosphofructokinase.